We begin with the raw amino-acid sequence, 539 residues long: Phosphoenolpyruvate carboxykinase (ATP) (539 aa).

Substrate contacts are provided by Arg64, Tyr206, and Lys212. ATP contacts are provided by residues Lys212, His231, and Gly247–Thr255. Mn(2+) contacts are provided by Lys212 and His231. Asp268 serves as a coordination point for Mn(2+). Residues Glu296, Arg332, Arg448–Ile449, and Thr454 contribute to the ATP site. Arg332 is a substrate binding site.

The protein belongs to the phosphoenolpyruvate carboxykinase (ATP) family. Monomer. It depends on Mn(2+) as a cofactor.

Its subcellular location is the cytoplasm. The enzyme catalyses oxaloacetate + ATP = phosphoenolpyruvate + ADP + CO2. It functions in the pathway carbohydrate biosynthesis; gluconeogenesis. Involved in the gluconeogenesis. Catalyzes the conversion of oxaloacetate (OAA) to phosphoenolpyruvate (PEP) through direct phosphoryl transfer between the nucleoside triphosphate and OAA. This is Phosphoenolpyruvate carboxykinase (ATP) from Sodalis glossinidius (strain morsitans).